A 374-amino-acid polypeptide reads, in one-letter code: S-adenosylmethionine:tRNA ribosyltransferase-isomerase (374 aa).

This sequence belongs to the QueA family. In terms of assembly, monomer.

It is found in the cytoplasm. It catalyses the reaction 7-aminomethyl-7-carbaguanosine(34) in tRNA + S-adenosyl-L-methionine = epoxyqueuosine(34) in tRNA + adenine + L-methionine + 2 H(+). It functions in the pathway tRNA modification; tRNA-queuosine biosynthesis. Functionally, transfers and isomerizes the ribose moiety from AdoMet to the 7-aminomethyl group of 7-deazaguanine (preQ1-tRNA) to give epoxyqueuosine (oQ-tRNA). The protein is S-adenosylmethionine:tRNA ribosyltransferase-isomerase of Prochlorococcus marinus (strain MIT 9301).